The following is a 247-amino-acid chain: Cell division protein ZapD (247 aa).

Belongs to the ZapD family. Interacts with FtsZ.

It localises to the cytoplasm. Functionally, cell division factor that enhances FtsZ-ring assembly. Directly interacts with FtsZ and promotes bundling of FtsZ protofilaments, with a reduction in FtsZ GTPase activity. This chain is Cell division protein ZapD, found in Escherichia coli O17:K52:H18 (strain UMN026 / ExPEC).